Reading from the N-terminus, the 267-residue chain is Thymidylate synthase (267 aa).

R24 lines the dUMP pocket. H54 lines the (6R)-5,10-methylene-5,6,7,8-tetrahydrofolate pocket. 129-130 (RR) serves as a coordination point for dUMP. The Nucleophile role is filled by C149. Residues 169–172 (RSAD), N180, and 210–212 (HVY) contribute to the dUMP site. D172 serves as a coordination point for (6R)-5,10-methylene-5,6,7,8-tetrahydrofolate. (6R)-5,10-methylene-5,6,7,8-tetrahydrofolate is bound at residue A266.

This sequence belongs to the thymidylate synthase family. Bacterial-type ThyA subfamily. In terms of assembly, homodimer.

It is found in the cytoplasm. It carries out the reaction dUMP + (6R)-5,10-methylene-5,6,7,8-tetrahydrofolate = 7,8-dihydrofolate + dTMP. It participates in pyrimidine metabolism; dTTP biosynthesis. Its function is as follows. Catalyzes the reductive methylation of 2'-deoxyuridine-5'-monophosphate (dUMP) to 2'-deoxythymidine-5'-monophosphate (dTMP) while utilizing 5,10-methylenetetrahydrofolate (mTHF) as the methyl donor and reductant in the reaction, yielding dihydrofolate (DHF) as a by-product. This enzymatic reaction provides an intracellular de novo source of dTMP, an essential precursor for DNA biosynthesis. The chain is Thymidylate synthase from Paenarthrobacter aurescens (strain TC1).